Here is a 470-residue protein sequence, read N- to C-terminus: ATP synthase subunit beta (470 aa).

ATP is bound at residue 156-163; it reads GGAGVGKT.

This sequence belongs to the ATPase alpha/beta chains family. As to quaternary structure, F-type ATPases have 2 components, CF(1) - the catalytic core - and CF(0) - the membrane proton channel. CF(1) has five subunits: alpha(3), beta(3), gamma(1), delta(1), epsilon(1). CF(0) has three main subunits: a(1), b(2) and c(9-12). The alpha and beta chains form an alternating ring which encloses part of the gamma chain. CF(1) is attached to CF(0) by a central stalk formed by the gamma and epsilon chains, while a peripheral stalk is formed by the delta and b chains.

It localises to the cell inner membrane. The enzyme catalyses ATP + H2O + 4 H(+)(in) = ADP + phosphate + 5 H(+)(out). Functionally, produces ATP from ADP in the presence of a proton gradient across the membrane. The catalytic sites are hosted primarily by the beta subunits. The sequence is that of ATP synthase subunit beta from Thermosipho africanus (strain TCF52B).